The sequence spans 271 residues: Phosphatidylglycerol--prolipoprotein diacylglyceryl transferase (271 aa).

The next 7 helical transmembrane spans lie at 25–45 (WYGI…KFFV), 60–80 (YFIW…ILIY), 103–123 (FVGI…IATL), 134–154 (WIFL…GRIG), 181–201 (PSQF…VYLA), 209–229 (GELI…CEFY), and 235–255 (GIGF…IMFI). Arg-152 contributes to the a 1,2-diacyl-sn-glycero-3-phospho-(1'-sn-glycerol) binding site.

It belongs to the Lgt family.

It is found in the cell inner membrane. It carries out the reaction L-cysteinyl-[prolipoprotein] + a 1,2-diacyl-sn-glycero-3-phospho-(1'-sn-glycerol) = an S-1,2-diacyl-sn-glyceryl-L-cysteinyl-[prolipoprotein] + sn-glycerol 1-phosphate + H(+). It participates in protein modification; lipoprotein biosynthesis (diacylglyceryl transfer). Its function is as follows. Catalyzes the transfer of the diacylglyceryl group from phosphatidylglycerol to the sulfhydryl group of the N-terminal cysteine of a prolipoprotein, the first step in the formation of mature lipoproteins. The protein is Phosphatidylglycerol--prolipoprotein diacylglyceryl transferase of Campylobacter jejuni subsp. doylei (strain ATCC BAA-1458 / RM4099 / 269.97).